The following is a 318-amino-acid chain: Deoxyhypusine hydroxylase (318 aa).

2 HEAT-like PBS-type repeats span residues 70-96 (LKHE…VLEN) and 103-129 (VRHE…YFKE). Residues histidine 72, glutamate 73, histidine 105, glutamate 106, histidine 231, glutamate 232, histidine 264, and glutamate 265 each coordinate Fe cation. An HEAT-like PBS-type 3 repeat occupies 262–288 (VRHEAAEALGSIATDECLPVLQSFLND).

Belongs to the deoxyhypusine hydroxylase family. Fe(2+) serves as cofactor.

It is found in the cytoplasm. The protein localises to the nucleus. It catalyses the reaction [eIF5A protein]-deoxyhypusine + AH2 + O2 = [eIF5A protein]-hypusine + A + H2O. It participates in protein modification; eIF5A hypusination. Functionally, catalyzes the hydroxylation of the N(6)-(4-aminobutyl)-L-lysine intermediate to form hypusine, an essential post-translational modification only found in mature eIF-5A factor. The protein is Deoxyhypusine hydroxylase of Candida albicans (strain SC5314 / ATCC MYA-2876) (Yeast).